Reading from the N-terminus, the 175-residue chain is Anterior gradient protein 2 homolog (175 aa).

The signal sequence occupies residues 1–20 (MEKISVSAFLLLVALSYTLA). Residues 21 to 40 (RDTTVKPAAKKDTKDSRPKL) form a required to promote cell adhesion region. 2 short sequence motifs (homodimer stabilization; interchain) span residues 45–54 (SRGWGDQLIW) and 60–67 (EALYKSKT).

Belongs to the AGR family. Monomer and homodimer. Interacts with LYPD3 and DAG1 (alphaDAG1). Interacts with MUC2; disulfide-linked.

The protein localises to the secreted. The protein resides in the endoplasmic reticulum. Its function is as follows. Required for MUC2 post-transcriptional synthesis and secretion. May play a role in the production of mucus by intestinal cells. Proto-oncogene that may play a role in cell migration, cell differentiation and cell growth. Promotes cell adhesion. This Pongo abelii (Sumatran orangutan) protein is Anterior gradient protein 2 homolog (AGR2).